Here is a 176-residue protein sequence, read N- to C-terminus: Ribosome maturation factor RimM (176 aa).

The PRC barrel domain maps to 97 to 176; it reads EDEFYWRDLI…QIIVDWDPDF (80 aa).

It belongs to the RimM family. Binds ribosomal protein uS19.

Its subcellular location is the cytoplasm. In terms of biological role, an accessory protein needed during the final step in the assembly of 30S ribosomal subunit, possibly for assembly of the head region. Essential for efficient processing of 16S rRNA. May be needed both before and after RbfA during the maturation of 16S rRNA. It has affinity for free ribosomal 30S subunits but not for 70S ribosomes. In Shewanella amazonensis (strain ATCC BAA-1098 / SB2B), this protein is Ribosome maturation factor RimM.